The chain runs to 508 residues: WD repeat-containing protein JIP5 (508 aa).

WD repeat units follow at residues 62-105 (EARK…WRTK), 106-145 (RHKGSVRALAIDHDGKHVYTIGADNVLKKADTHSGKVVKK), 149-188 (DGGSKVTKLVKSATHDFLVMGDEVGTIVVLDSNDLTTKNT), 193-233 (HGGD…MKQP), 253-294 (DQED…LEDQ), and 345-382 (SGLDEVGMLDLDFEYRLVSGGMDKLKIWEVPKEENSDS). The disordered stretch occupies residues 376-508 (KEENSDSDSD…SHGITKFDGL (133 aa)). Residues 380–393 (SDSDSDSDINDDSE) are compositionally biased toward acidic residues. Residues 407 to 419 (ELGSGSESEVESD) are compositionally biased toward low complexity. Residues 431–472 (CTGSDLPGDIEGSEGENNSNDDDNHDDREELWKELDQPTSDE) form a WD 7 repeat. A compositionally biased stretch (acidic residues) spans 441 to 454 (EGSEGENNSNDDDN). Residues 455–466 (HDDREELWKELD) show a composition bias toward basic and acidic residues. Positions 478-492 (KRSLKVKDKKNKKFK) are enriched in basic residues.

It belongs to the WD repeat WDR55 family.

Its subcellular location is the nucleus. The protein resides in the nucleolus. The protein is WD repeat-containing protein JIP5 (JIP5) of Candida glabrata (strain ATCC 2001 / BCRC 20586 / JCM 3761 / NBRC 0622 / NRRL Y-65 / CBS 138) (Yeast).